We begin with the raw amino-acid sequence, 528 residues long: Phosphoenolpyruvate carboxykinase (ATP) (528 aa).

Substrate contacts are provided by Arg56, Tyr192, and Lys198. Residues Lys198, His217, and 233–241 (GLSGTGKTT) each bind ATP. 2 residues coordinate Mn(2+): Lys198 and His217. Asp254 contacts Mn(2+). The ATP site is built by Glu282, Arg319, and Thr444. Residue Arg319 coordinates substrate.

The protein belongs to the phosphoenolpyruvate carboxykinase (ATP) family. Requires Mn(2+) as cofactor.

Its subcellular location is the cytoplasm. It carries out the reaction oxaloacetate + ATP = phosphoenolpyruvate + ADP + CO2. The protein operates within carbohydrate biosynthesis; gluconeogenesis. Functionally, involved in the gluconeogenesis. Catalyzes the conversion of oxaloacetate (OAA) to phosphoenolpyruvate (PEP) through direct phosphoryl transfer between the nucleoside triphosphate and OAA. The polypeptide is Phosphoenolpyruvate carboxykinase (ATP) (Geobacillus thermodenitrificans (strain NG80-2)).